Here is a 430-residue protein sequence, read N- to C-terminus: Trigger factor (430 aa).

A PPIase FKBP-type domain is found at 163–248 (GNIAIIDFKG…IKDIKVKELP (86 aa)).

Belongs to the FKBP-type PPIase family. Tig subfamily.

The protein localises to the cytoplasm. The catalysed reaction is [protein]-peptidylproline (omega=180) = [protein]-peptidylproline (omega=0). Involved in protein export. Acts as a chaperone by maintaining the newly synthesized protein in an open conformation. Functions as a peptidyl-prolyl cis-trans isomerase. The sequence is that of Trigger factor from Clostridium botulinum (strain Kyoto / Type A2).